We begin with the raw amino-acid sequence, 503 residues long: Aspartyl/glutamyl-tRNA(Asn/Gln) amidotransferase subunit B (503 aa).

Belongs to the GatB/GatE family. GatB subfamily. In terms of assembly, heterotrimer of A, B and C subunits.

It catalyses the reaction L-glutamyl-tRNA(Gln) + L-glutamine + ATP + H2O = L-glutaminyl-tRNA(Gln) + L-glutamate + ADP + phosphate + H(+). The catalysed reaction is L-aspartyl-tRNA(Asn) + L-glutamine + ATP + H2O = L-asparaginyl-tRNA(Asn) + L-glutamate + ADP + phosphate + 2 H(+). Functionally, allows the formation of correctly charged Asn-tRNA(Asn) or Gln-tRNA(Gln) through the transamidation of misacylated Asp-tRNA(Asn) or Glu-tRNA(Gln) in organisms which lack either or both of asparaginyl-tRNA or glutaminyl-tRNA synthetases. The reaction takes place in the presence of glutamine and ATP through an activated phospho-Asp-tRNA(Asn) or phospho-Glu-tRNA(Gln). The chain is Aspartyl/glutamyl-tRNA(Asn/Gln) amidotransferase subunit B from Rhodococcus erythropolis (strain PR4 / NBRC 100887).